A 729-amino-acid chain; its full sequence is Pentatricopeptide repeat-containing protein At4g04370 (729 aa).

17 PPR repeats span residues 10–44 (STKY…KLLP), 45–79 (DTFT…GFSS), 80–110 (DFYI…MRER), 111–145 (DVVH…GIKP), 178–208 (DIAV…MEQR), 209–243 (DMVS…GLRP), 244–278 (DQQT…GFDV), 279–309 (DMHL…IPNK), 310–344 (DVVC…GSDL), 345–379 (SSEA…GYTL), 380–414 (DTPA…DLVS), 415–445 (WNAI…TVQQ), 447–481 (DSFT…FIRP), 482–512 (CSLV…ISWK), 513–547 (DVVS…GMEP), 548–583 (NHVI…GVEP), and 584–618 (NHEH…PSID). A type E motif region spans residues 619 to 694 (VLGIILDACR…LPGWSKIEMN (76 aa)). The segment at 695-723 (GKTTTFFMNHTSHSDDTVSLLKLLSREMM) is type E(+) motif.

It belongs to the PPR family. PCMP-E subfamily.

In Arabidopsis thaliana (Mouse-ear cress), this protein is Pentatricopeptide repeat-containing protein At4g04370 (PCMP-E99).